The primary structure comprises 465 residues: Antithrombin-III (465 aa).

An N-terminal signal peptide occupies residues 1 to 32 (MISNGIGTVTAGKRSICLLPLLLIGLWGCVTC). Disulfide bonds link cysteine 41-cysteine 161 and cysteine 54-cysteine 128. A Phosphothreonine modification is found at threonine 64. Serine 69 carries the post-translational modification Phosphoserine. Tryptophan 82 is a binding site for heparin. N-linked (GlcNAc...) asparagine glycosylation is present at asparagine 129. Residue arginine 162 participates in heparin binding. Asparagine 168 carries N-linked (GlcNAc...) asparagine glycosylation. Residue arginine 178 coordinates heparin. Asparagine 188 and asparagine 225 each carry an N-linked (GlcNAc...) asparagine glycan. A disulfide bridge connects residues cysteine 280 and cysteine 463.

This sequence belongs to the serpin family. As to quaternary structure, forms protease inhibiting heterodimer with TMPRSS7. Post-translationally, phosphorylated by FAM20C in the extracellular medium. As to expression, plasma.

It is found in the secreted. The protein resides in the extracellular space. In terms of biological role, most important serine protease inhibitor in plasma that regulates the blood coagulation cascade. AT-III inhibits thrombin, matriptase-3/TMPRSS7, as well as factors IXa, Xa and XIa. Its inhibitory activity is greatly enhanced in the presence of heparin. The polypeptide is Antithrombin-III (SERPINC1) (Bos taurus (Bovine)).